Here is a 570-residue protein sequence, read N- to C-terminus: NADPH oxidase 2 (570 aa).

Residues 2–9 (GNWAVNEG) are Cytoplasmic-facing. A helical membrane pass occupies residues 10–36 (LSIFVILVWLGLNVFLFINYYKVYDDG). Topologically, residues 37-46 (PKYNYTRKLL) are extracellular. The N-linked (GlcNAc...) asparagine glycan is linked to Asn40. The chain crosses the membrane as a helical span at residues 47–72 (GSALALARAPAACLNFNCMLILLPVC). The Ferric oxidoreductase domain maps to 54-286 (RAPAACLNFN…MFLYLCERLV (233 aa)). Residues 73-95 (RNLLSFLRGSSACCSTRIRRQLD) lie on the Cytoplasmic side of the membrane. Residues 96 to 130 (RNLTFHKMVAWMIALHTAIHTIAHLFNVEWCVNAR) traverse the membrane as a helical segment. 2 residues coordinate heme b: His101 and His115. Over 131–163 (VGISDRYSIALSDIGDNENEEYLNFAREKIKNP) the chain is Extracellular. Residues Lys159 and Lys161 each participate in a glycyl lysine isopeptide (Lys-Gly) (interchain with G-Cter in ubiquitin) cross-link. Residues 164-194 (EGGLYVAVTRLAGITGIVITLCLILIITSST) traverse the membrane as a helical segment. Topologically, residues 195-203 (KTIRRSYFE) are cytoplasmic. FAD-binding residues include Arg199 and Ser200. The chain crosses the membrane as a helical span at residues 204 to 222 (VFWYTHHLFVIFFIGLAIH). Heme b is bound by residues Trp206, His209, His222, Arg226, and Ile227. Over 223–267 (GAERIVRGQTAESLEEHNLDICADKIEEWGKIKECPVPKFAGNPP) the chain is Extracellular. A Glycyl lysine isopeptide (Lys-Gly) (interchain with G-Cter in ubiquitin) cross-link involves residue Lys255. Residues Met268, Tyr280, and Arg287 each coordinate heme b. The chain crosses the membrane as a helical span at residues 268–285 (MTWKWIVGPMFLYLCERL). Over 286 to 570 (VRFWRSQQKV…VHFIFNKENF (285 aa)) the chain is Cytoplasmic. The FAD-binding FR-type domain occupies 287–397 (RFWRSQQKVV…DGPFGTASED (111 aa)). Glycyl lysine isopeptide (Lys-Gly) (interchain with G-Cter in ubiquitin) cross-links involve residues Lys294, Lys299, Lys306, Lys328, and Lys334. Trp337, His338, Pro339, Thr341, His354, Arg356, Trp361, and Thr362 together coordinate FAD. Residue Lys381 forms a Glycyl lysine isopeptide (Lys-Gly) (interchain with G-Cter in ubiquitin) linkage. Residues Ile411, Arg446, and Thr481 each contribute to the NADPH site. Lys506 is covalently cross-linked (Glycyl lysine isopeptide (Lys-Gly) (interchain with G-Cter in ubiquitin)). NADPH is bound at residue Arg513. Residue Lys567 forms a Glycyl lysine isopeptide (Lys-Gly) (interchain with G-Cter in ubiquitin) linkage.

Component of the phagocyte NADPH oxidase core complex/cytochrome b558 complex, composed of CYBB (heavy chain (beta)) and CYBA (light chain (alpha)). Component of the phagocyte NADPH oxidase complex composed of an obligatory core heterodimer formed by the membrane proteins CYBA and CYBB and the cytosolic regulatory subunits NCF1/p47-phox, NCF2/p67-phox, NCF4/p40-phox and the small GTPase RAC1 or RAC2. Interacts with NCF1 (phosphorylated form). Interacts with NCF2; the interaction is enhanced in the presence of GBP7. Interacts with RAC2. Interacts with RAC1. Interacts with calprotectin (S100A8/9). Interacts with NRROS; the interaction is direct and impairs formation of a stable NADPH oxidase complex. Interacts with CYBC1; CYBC1 may act as a chaperone stabilizing Cytochrome b-245 heterodimer. The CYBA:CYBB complex interacts with GBP7. It depends on FAD as a cofactor. Glycosylated. In terms of processing, phosphorylated on Ser and Thr residues by PKC during neutrophils activation. Phosphorylation enhances the NADPH oxidase activity and stimulates its interaction with RAC2, NCF2/p67-phox, and NCF1/p47-phox. Post-translationally, undergoes 'Lys-48'-linked polyubiquitination, likely by RNF145, triggering endoplasmic reticulum-associated degradation.

The protein localises to the cell membrane. It carries out the reaction NADPH + 2 O2 = 2 superoxide + NADP(+) + H(+). Its function is as follows. Catalytic subunit of the phagocyte NADPH oxidase complex that mediates the transfer of electrons from cytosolic NADPH to O2 to produce the superoxide anion (O2(-)). In the activated complex, electrons are first transferred from NADPH to flavin adenine dinucleotide (FAD) and subsequently transferred via two heme molecules to molecular oxygen, producing superoxide through an outer-sphere reaction. Activation of the NADPH oxidase complex is initiated by the assembly of cytosolic subunits of the NADPH oxidase complex with the core NADPH oxidase complex to form a complex at the plasma membrane or phagosomal membrane. This activation process is initiated by phosphorylation dependent binding of the cytosolic NCF1/p47-phox subunit to the C-terminus of CYBA/p22-phox. NADPH oxidase complex assembly is impaired through interaction with NRROS. This is NADPH oxidase 2 from Mus musculus (Mouse).